Reading from the N-terminus, the 155-residue chain is V-type proton ATPase 16 kDa proteolipid subunit c (155 aa).

Residues 1 to 10 (MADIKNNPEY) lie on the Lumenal side of the membrane. The chain crosses the membrane as a helical span at residues 11-33 (SSFFGVMGASSAMVFSAMGAAYG). Topologically, residues 34 to 55 (TAKSGTGIAAMSVMRPELIMKS) are cytoplasmic. A helical transmembrane segment spans residues 56–76 (IIPVVMAGIIAIYGLVVAVLI). Over 77-92 (ANSLTDGITLYRSFLQ) the chain is Lumenal. The helical transmembrane segment at 93 to 114 (LGAGLSVGLSGLAAGFAIGIVG) threads the bilayer. Residues 115–131 (DAGVRGTAQQPRLFVGM) lie on the Cytoplasmic side of the membrane. A helical transmembrane segment spans residues 132-152 (ILILIFAEVLGLYGLIVALIL). The Lumenal portion of the chain corresponds to 153–155 (STK).

It belongs to the V-ATPase proteolipid subunit family. In terms of assembly, V-ATPase is a heteromultimeric enzyme made up of two complexes: the ATP-hydrolytic V1 complex and the proton translocation V0 complex. The V1 complex consists of three catalytic AB heterodimers that form a heterohexamer, three peripheral stalks each consisting of EG heterodimers, one central rotor including subunits D and F, and the regulatory subunits C and H. The proton translocation complex V0 consists of the proton transport subunit a, a ring of proteolipid subunits c9c'', rotary subunit d, subunits e and f, and the accessory subunits ATP6AP1/Ac45 and ATP6AP2/PRR. Interacts with the V0 complex V-ATPase subunit a4 ATP6V0A4. Interacts with LASS2. Interacts with RNF182; this interaction leads to ubiquitination and degradation via the proteasome pathway. Ubiquitinated by RNF182, leading to its degradation via the ubiquitin-proteasome pathway.

It is found in the cytoplasmic vesicle. The protein localises to the clathrin-coated vesicle membrane. Its subcellular location is the secretory vesicle. It localises to the synaptic vesicle membrane. Its function is as follows. Proton-conducting pore forming subunit of the V0 complex of vacuolar(H+)-ATPase (V-ATPase), a multisubunit enzyme composed of a peripheral complex (V1) that hydrolyzes ATP and a membrane integral complex (V0) that translocates protons. V-ATPase is responsible for acidifying and maintaining the pH of intracellular compartments and in some cell types, is targeted to the plasma membrane, where it is responsible for acidifying the extracellular environment. This Mus musculus (Mouse) protein is V-type proton ATPase 16 kDa proteolipid subunit c (Atp6v0c).